The primary structure comprises 429 residues: Ribosomal RNA small subunit methyltransferase B (429 aa).

Residues 254–260 (CAAPGGK), aspartate 277, aspartate 303, and aspartate 322 each bind S-adenosyl-L-methionine. Catalysis depends on cysteine 375, which acts as the Nucleophile. A disordered region spans residues 397–419 (ALSETGTPDQPGQQNLPGGEEGD). Positions 400-412 (ETGTPDQPGQQNL) are enriched in polar residues.

The protein belongs to the class I-like SAM-binding methyltransferase superfamily. RsmB/NOP family.

The protein localises to the cytoplasm. It catalyses the reaction cytidine(967) in 16S rRNA + S-adenosyl-L-methionine = 5-methylcytidine(967) in 16S rRNA + S-adenosyl-L-homocysteine + H(+). Its function is as follows. Specifically methylates the cytosine at position 967 (m5C967) of 16S rRNA. In Salmonella paratyphi A (strain ATCC 9150 / SARB42), this protein is Ribosomal RNA small subunit methyltransferase B.